The chain runs to 232 residues: 5'-methylthioadenosine/S-adenosylhomocysteine nucleosidase (232 aa).

Glutamate 12 serves as the catalytic Proton acceptor. Substrate-binding positions include glycine 78, isoleucine 152, and 173-174; that span reads ME. Catalysis depends on aspartate 197, which acts as the Proton donor.

Belongs to the PNP/UDP phosphorylase family. MtnN subfamily. In terms of assembly, homodimer.

It catalyses the reaction S-adenosyl-L-homocysteine + H2O = S-(5-deoxy-D-ribos-5-yl)-L-homocysteine + adenine. It carries out the reaction S-methyl-5'-thioadenosine + H2O = 5-(methylsulfanyl)-D-ribose + adenine. The enzyme catalyses 5'-deoxyadenosine + H2O = 5-deoxy-D-ribose + adenine. It functions in the pathway amino-acid biosynthesis; L-methionine biosynthesis via salvage pathway; S-methyl-5-thio-alpha-D-ribose 1-phosphate from S-methyl-5'-thioadenosine (hydrolase route): step 1/2. In terms of biological role, catalyzes the irreversible cleavage of the glycosidic bond in both 5'-methylthioadenosine (MTA) and S-adenosylhomocysteine (SAH/AdoHcy) to adenine and the corresponding thioribose, 5'-methylthioribose and S-ribosylhomocysteine, respectively. Also cleaves 5'-deoxyadenosine, a toxic by-product of radical S-adenosylmethionine (SAM) enzymes, into 5-deoxyribose and adenine. Thus, is required for in vivo function of the radical SAM enzymes biotin synthase and lipoic acid synthase, that are inhibited by 5'-deoxyadenosine accumulation. The sequence is that of 5'-methylthioadenosine/S-adenosylhomocysteine nucleosidase from Salmonella dublin (strain CT_02021853).